Here is a 256-residue protein sequence, read N- to C-terminus: Pimeloyl-[acyl-carrier protein] methyl ester esterase (256 aa).

Residues 15–242 enclose the AB hydrolase-1 domain; it reads HLVLLHGWGL…AAHAPFISHP (228 aa). Residues Trp-22, 82–83, and 143–147 each bind substrate; these read SL and FLALQ. Catalysis depends on Ser-82, which acts as the Nucleophile. Catalysis depends on residues Asp-207 and His-235. Substrate is bound at residue His-235.

This sequence belongs to the AB hydrolase superfamily. Carboxylesterase BioH family. As to quaternary structure, monomer.

It localises to the cytoplasm. The catalysed reaction is 6-carboxyhexanoyl-[ACP] methyl ester + H2O = 6-carboxyhexanoyl-[ACP] + methanol + H(+). It participates in cofactor biosynthesis; biotin biosynthesis. Its function is as follows. The physiological role of BioH is to remove the methyl group introduced by BioC when the pimeloyl moiety is complete. It allows to synthesize pimeloyl-ACP via the fatty acid synthetic pathway through the hydrolysis of the ester bonds of pimeloyl-ACP esters. In Salmonella agona (strain SL483), this protein is Pimeloyl-[acyl-carrier protein] methyl ester esterase.